Reading from the N-terminus, the 91-residue chain is Small ribosomal subunit protein uS15 (91 aa).

It belongs to the universal ribosomal protein uS15 family. As to quaternary structure, part of the 30S ribosomal subunit. Forms a bridge to the 50S subunit in the 70S ribosome, contacting the 23S rRNA.

In terms of biological role, one of the primary rRNA binding proteins, it binds directly to 16S rRNA where it helps nucleate assembly of the platform of the 30S subunit by binding and bridging several RNA helices of the 16S rRNA. Its function is as follows. Forms an intersubunit bridge (bridge B4) with the 23S rRNA of the 50S subunit in the ribosome. The sequence is that of Small ribosomal subunit protein uS15 from Synechococcus sp. (strain JA-2-3B'a(2-13)) (Cyanobacteria bacterium Yellowstone B-Prime).